The following is a 420-amino-acid chain: COP9 signalosome complex subunit 11 (420 aa).

Positions 177–346 (SIHEHPSLVD…VYYKEDLPVG (170 aa)) constitute a PCI domain. Residues 386-420 (VEPLNRSQDMDAFELHEQSEDEEYEEEHLEEGENV) are disordered. A compositionally biased stretch (acidic residues) spans 404-420 (SEDEEYEEEHLEEGENV).

Component of a COP9 signalosome-like (CSN) complex.

The protein localises to the cytoplasm. The protein resides in the nucleus. In terms of biological role, component of the COP9 signalosome (CSN) complex that acts as an regulator of the ubiquitin (Ubl) conjugation pathway by mediating the deneddylation of the cullin subunit of SCF-type E3 ubiquitin-protein ligase complexes The CSN complex is involved in the regulation of the mating pheromone response. PCI8 may also be involved in transcriptional and translational control. In Eremothecium gossypii (strain ATCC 10895 / CBS 109.51 / FGSC 9923 / NRRL Y-1056) (Yeast), this protein is COP9 signalosome complex subunit 11 (PCI8).